A 515-amino-acid chain; its full sequence is Putative ribose/galactose/methyl galactoside import ATP-binding protein (515 aa).

ABC transporter domains are found at residues 26–262 (LEVA…VGRE) and 272–511 (VALG…KIMD). An ATP-binding site is contributed by 58-65 (GENGAGKS).

It belongs to the ABC transporter superfamily. Carbohydrate importer 2 (CUT2) (TC 3.A.1.2) family.

Its subcellular location is the cell inner membrane. The enzyme catalyses D-ribose(out) + ATP + H2O = D-ribose(in) + ADP + phosphate + H(+). The catalysed reaction is D-galactose(out) + ATP + H2O = D-galactose(in) + ADP + phosphate + H(+). Part of an ABC transporter complex involved in carbohydrate import. Could be involved in ribose, galactose and/or methyl galactoside import. Responsible for energy coupling to the transport system. This chain is Putative ribose/galactose/methyl galactoside import ATP-binding protein, found in Hahella chejuensis (strain KCTC 2396).